The primary structure comprises 334 residues: uncharacterized protein (334 aa).

Residue Y52 is the Proton donor of the active site. The segment at 314–334 (LPPPASPNSEPQVTGGCSSMC) is disordered. Positions 320 to 334 (PNSEPQVTGGCSSMC) are enriched in polar residues.

This sequence belongs to the aldo/keto reductase family.

It is found in the cytoplasm. The protein resides in the nucleus. This is an uncharacterized protein from Schizosaccharomyces pombe (strain 972 / ATCC 24843) (Fission yeast).